The primary structure comprises 407 residues: uncharacterized protein (407 aa).

The first 27 residues, 1–27 (MRILAMTRAHNAGRTLAATLDSLAVFS), serve as a signal peptide directing secretion.

This is an uncharacterized protein from Mycobacterium bovis (strain ATCC BAA-935 / AF2122/97).